A 294-amino-acid chain; its full sequence is Ribosomal protein L11 methyltransferase (294 aa).

Residues Thr147, Gly169, Asp191, and Asn231 each coordinate S-adenosyl-L-methionine.

It belongs to the methyltransferase superfamily. PrmA family.

The protein localises to the cytoplasm. The enzyme catalyses L-lysyl-[protein] + 3 S-adenosyl-L-methionine = N(6),N(6),N(6)-trimethyl-L-lysyl-[protein] + 3 S-adenosyl-L-homocysteine + 3 H(+). In terms of biological role, methylates ribosomal protein L11. The polypeptide is Ribosomal protein L11 methyltransferase (Dichelobacter nodosus (strain VCS1703A)).